A 125-amino-acid polypeptide reads, in one-letter code: Small ribosomal subunit protein uS13 (125 aa).

Belongs to the universal ribosomal protein uS13 family. Part of the 30S ribosomal subunit. Forms a loose heterodimer with protein S19. Forms two bridges to the 50S subunit in the 70S ribosome.

In terms of biological role, located at the top of the head of the 30S subunit, it contacts several helices of the 16S rRNA. In the 70S ribosome it contacts the 23S rRNA (bridge B1a) and protein L5 of the 50S subunit (bridge B1b), connecting the 2 subunits; these bridges are implicated in subunit movement. Contacts the tRNAs in the A and P-sites. This chain is Small ribosomal subunit protein uS13, found in Rickettsia typhi (strain ATCC VR-144 / Wilmington).